We begin with the raw amino-acid sequence, 250 residues long: AA9 family lytic polysaccharide monooxygenase F (250 aa).

Residues 1-18 form the signal peptide; the sequence is MHLKTFSNLLVFVATVAA. Histidine 19 is a Cu(2+) binding site. N-linked (GlcNAc...) asparagine glycans are attached at residues asparagine 24 and asparagine 85. Intrachain disulfides connect cysteine 70-cysteine 199 and cysteine 169-cysteine 250. Histidine 108 is a Cu(2+) binding site. Asparagine 146 is a glycosylation site (N-linked (GlcNAc...) asparagine). Residues histidine 185 and glutamine 194 each coordinate O2. Tyrosine 196 is a Cu(2+) binding site.

This sequence belongs to the polysaccharide monooxygenase AA9 family. It depends on Cu(2+) as a cofactor.

It localises to the secreted. The enzyme catalyses [(1-&gt;4)-beta-D-glucosyl]n+m + reduced acceptor + O2 = 4-dehydro-beta-D-glucosyl-[(1-&gt;4)-beta-D-glucosyl]n-1 + [(1-&gt;4)-beta-D-glucosyl]m + acceptor + H2O.. Its function is as follows. Lytic polysaccharide monooxygenase (LPMO) that depolymerizes crystalline and amorphous polysaccharides via the oxidation of scissile alpha- or beta-(1-4)-glycosidic bonds, yielding C1 and C4 oxidation products. Catalysis by LPMOs requires the reduction of the active-site copper from Cu(II) to Cu(I) by a reducing agent and H(2)O(2) or O(2) as a cosubstrate. The chain is AA9 family lytic polysaccharide monooxygenase F from Botryotinia fuckeliana (strain B05.10) (Noble rot fungus).